A 132-amino-acid polypeptide reads, in one-letter code: Small ribosomal subunit protein uS8 (132 aa).

This sequence belongs to the universal ribosomal protein uS8 family. Part of the 30S ribosomal subunit. Contacts proteins S5 and S12.

One of the primary rRNA binding proteins, it binds directly to 16S rRNA central domain where it helps coordinate assembly of the platform of the 30S subunit. This chain is Small ribosomal subunit protein uS8, found in Bacillus subtilis (strain 168).